Consider the following 861-residue polypeptide: APC membrane recruitment protein 3 (861 aa).

8 disordered regions span residues 1–77 (MELK…PKGG), 179–206 (AEGK…PPGE), 261–289 (PSLE…GPLQ), 351–415 (PLCP…FPRD), 514–558 (RGPT…GGAT), 576–644 (GLLA…SQKE), 716–742 (MLEQ…STQD), and 786–822 (AHGS…SQQE). The segment covering 362–384 (SKASSIDTGTPKSEQPESVSTSD) has biased composition (polar residues). Over residues 518–530 (PRAPPTPGQPAAP) the composition is skewed to pro residues. Over residues 584–595 (ALGGATQGTGTL) the composition is skewed to low complexity. Residues 598 to 609 (DASREEETRGHS) show a composition bias toward basic and acidic residues. 2 stretches are compositionally biased toward polar residues: residues 615–629 (SMES…TSGK) and 719–730 (QKQSSSSPSMTT).

The protein belongs to the Amer family.

It localises to the cell membrane. Its function is as follows. Regulator of the canonical Wnt signaling pathway. Acts by specifically binding phosphatidylinositol 4,5-bisphosphate (PtdIns(4,5)P2), translocating to the cell membrane. The polypeptide is APC membrane recruitment protein 3 (AMER3) (Homo sapiens (Human)).